The chain runs to 376 residues: Putative glutamate--cysteine ligase 2 (376 aa).

Belongs to the glutamate--cysteine ligase type 2 family. YbdK subfamily.

The catalysed reaction is L-cysteine + L-glutamate + ATP = gamma-L-glutamyl-L-cysteine + ADP + phosphate + H(+). Functionally, ATP-dependent carboxylate-amine ligase which exhibits weak glutamate--cysteine ligase activity. The polypeptide is Putative glutamate--cysteine ligase 2 (Paracoccus denitrificans (strain Pd 1222)).